The primary structure comprises 364 residues: Fructose-bisphosphate aldolase B (364 aa).

2 residues coordinate substrate: R56 and K147. Catalysis depends on E188, which acts as the Proton acceptor. K230 (schiff-base intermediate with dihydroxyacetone-P) is an active-site residue.

It belongs to the class I fructose-bisphosphate aldolase family. As to quaternary structure, homotetramer.

Its subcellular location is the cytoplasm. The protein localises to the cytoskeleton. It localises to the microtubule organizing center. It is found in the centrosome. The protein resides in the centriolar satellite. It catalyses the reaction beta-D-fructose 1,6-bisphosphate = D-glyceraldehyde 3-phosphate + dihydroxyacetone phosphate. It participates in carbohydrate degradation; glycolysis; D-glyceraldehyde 3-phosphate and glycerone phosphate from D-glucose: step 4/4. The polypeptide is Fructose-bisphosphate aldolase B (aldob) (Sparus aurata (Gilthead sea bream)).